Consider the following 677-residue polypeptide: MHHLLEQSADMATALLAGEKLRELILPGSQDDKAGALAALLLQLKLELPFDRVVTIGTVLVPILLVTLVFTKNFAEEPIYCYTPHNFTRDQALYARGYCWTELRDALPGVDASLWPSLFEHKFLPYALLAFAAIMYVPALGWEFLASTRLTSELNFLLQEIDNCYHRAAEGRAPKIEKQIQSKGPGITEREKREIIENAEKEKSPEQNLFEKYLERRGRSNFLAKLYLARHVLILLLSVVPISYLCTYYATQKQNEFTCALGASPDGPVGSAGPTVRVSCKLPSVQLQRIIAGVDIVLLCFMNLIILVNLIHLFIFRKSNFIFDKLNKVGIKTRRQWRRSQFCDINILAMFCNENRDHIKSLNRLDFITNESDLMYDNVVRQLLAALAQSNHDTTPTVRDSGIQTVDPSINPAEPDGSAEPPVVKRPRKKMKWIPTSNPLPQPFKEQLAIMRVENSKTEKPKPVRRKTATDTLIAPLLDAGARAAHHYKGSGGDSGPSSAPPAASEKKHTRHFSLDVHPYILGTKKAKTEAVPPALPASRSQEGGFLSQTEECGLGLAAAPTKDAPLPEKEIPYPTEPALPGLPSGGSFHVCSPPAAPAAASLSPGSLGKADPLTILSRNATHPLLHISTLYEAREEEEGGPCAPSDMGDLLSIPPPQQILIATFEEPRTVVSTVEF.

Topologically, residues 11–53 (MATALLAGEKLRELILPGSQDDKAGALAALLLQLKLELPFDRV) are cytoplasmic. The helical transmembrane segment at 54-74 (VTIGTVLVPILLVTLVFTKNF) threads the bilayer. The Extracellular segment spans residues 75–125 (AEEPIYCYTPHNFTRDQALYARGYCWTELRDALPGVDASLWPSLFEHKFLP). The N-linked (GlcNAc...) asparagine glycan is linked to N86. The chain crosses the membrane as a helical span at residues 126-146 (YALLAFAAIMYVPALGWEFLA). Residues 147 to 230 (STRLTSELNF…NFLAKLYLAR (84 aa)) lie on the Cytoplasmic side of the membrane. A helical transmembrane segment spans residues 231 to 251 (HVLILLLSVVPISYLCTYYAT). The Extracellular portion of the chain corresponds to 252-295 (QKQNEFTCALGASPDGPVGSAGPTVRVSCKLPSVQLQRIIAGVD). Residues 296–316 (IVLLCFMNLIILVNLIHLFIF) traverse the membrane as a helical segment. Residues 317–617 (RKSNFIFDKL…LGKADPLTIL (301 aa)) are Cytoplasmic-facing. Residues 394–408 (TTPTVRDSGIQTVDP) are compositionally biased toward polar residues. Disordered regions lie at residues 394–425 (TTPT…PVVK) and 485–512 (AHHY…HTRH). S593 and S604 each carry phosphoserine.

The protein belongs to the pannexin family. As to quaternary structure, homoheptameric. In terms of processing, S-palmitoylated in neural stem and progenitor cells. Post-translationally, cleaved by CASP3 and CASP7 during apoptosis. Cleavage has no effect on it function. As to expression, expression is enriched in central nervous system. Expressed in suprabasal layers of skin epidermis. In terms of tissue distribution, more aboundantly expressed in skin.

It is found in the cell membrane. Its subcellular location is the golgi apparatus membrane. It localises to the endoplasmic reticulum membrane. It carries out the reaction ATP(in) = ATP(out). The enzyme catalyses chloride(in) = chloride(out). The catalysed reaction is iodide(out) = iodide(in). It catalyses the reaction Na(+)(in) = Na(+)(out). It carries out the reaction D-gluconate(in) = D-gluconate(out). Functionally, ion channel with a slight anion preference. Also able to release ATP. Plays a role in regulating neurogenesis and apoptosis in keratinocytes. The sequence is that of Pannexin-2 (Panx2) from Mus musculus (Mouse).